A 171-amino-acid polypeptide reads, in one-letter code: UPF0763 protein HPP12_0677 (171 aa).

It belongs to the UPF0763 family.

This is UPF0763 protein HPP12_0677 from Helicobacter pylori (strain P12).